Consider the following 274-residue polypeptide: tRNA-cytidine(32) 2-sulfurtransferase (274 aa).

Positions 40 to 45 match the PP-loop motif motif; the sequence is SGGKDS. 3 residues coordinate [4Fe-4S] cluster: Cys115, Cys118, and Cys206.

It belongs to the TtcA family. Homodimer. Requires Mg(2+) as cofactor. The cofactor is [4Fe-4S] cluster.

The protein localises to the cytoplasm. It catalyses the reaction cytidine(32) in tRNA + S-sulfanyl-L-cysteinyl-[cysteine desulfurase] + AH2 + ATP = 2-thiocytidine(32) in tRNA + L-cysteinyl-[cysteine desulfurase] + A + AMP + diphosphate + H(+). Its pathway is tRNA modification. In terms of biological role, catalyzes the ATP-dependent 2-thiolation of cytidine in position 32 of tRNA, to form 2-thiocytidine (s(2)C32). The sulfur atoms are provided by the cysteine/cysteine desulfurase (IscS) system. In Pseudomonas aeruginosa (strain LESB58), this protein is tRNA-cytidine(32) 2-sulfurtransferase.